A 127-amino-acid chain; its full sequence is Snaclec macrovipecetin subunit beta (127 aa).

3 disulfides stabilise this stretch: Cys-4-Cys-15, Cys-32-Cys-121, and Cys-98-Cys-113. The C-type lectin domain maps to 11–122; it reads YEGHCYKVFD…CSRTYKFVCK (112 aa).

As to quaternary structure, heterodimer of subunits alpha and beta; disulfide-linked. In terms of tissue distribution, expressed by the venom gland.

Its subcellular location is the secreted. Interferes with one step of hemostasis (modulation of platelet aggregation, or coagulation cascade, for example). This Macrovipera lebetinus (Levantine viper) protein is Snaclec macrovipecetin subunit beta.